The following is a 374-amino-acid chain: Putative glutamate--cysteine ligase 2 (374 aa).

Belongs to the glutamate--cysteine ligase type 2 family. YbdK subfamily.

It catalyses the reaction L-cysteine + L-glutamate + ATP = gamma-L-glutamyl-L-cysteine + ADP + phosphate + H(+). Functionally, ATP-dependent carboxylate-amine ligase which exhibits weak glutamate--cysteine ligase activity. The sequence is that of Putative glutamate--cysteine ligase 2 from Acidovorax ebreus (strain TPSY) (Diaphorobacter sp. (strain TPSY)).